The primary structure comprises 201 residues: ATP-dependent Clp protease proteolytic subunit (201 aa).

S98 (nucleophile) is an active-site residue. Residue H123 is part of the active site.

This sequence belongs to the peptidase S14 family. As to quaternary structure, fourteen ClpP subunits assemble into 2 heptameric rings which stack back to back to give a disk-like structure with a central cavity, resembling the structure of eukaryotic proteasomes.

The protein resides in the cytoplasm. It carries out the reaction Hydrolysis of proteins to small peptides in the presence of ATP and magnesium. alpha-casein is the usual test substrate. In the absence of ATP, only oligopeptides shorter than five residues are hydrolyzed (such as succinyl-Leu-Tyr-|-NHMec, and Leu-Tyr-Leu-|-Tyr-Trp, in which cleavage of the -Tyr-|-Leu- and -Tyr-|-Trp bonds also occurs).. Its function is as follows. Cleaves peptides in various proteins in a process that requires ATP hydrolysis. Has a chymotrypsin-like activity. Plays a major role in the degradation of misfolded proteins. This chain is ATP-dependent Clp protease proteolytic subunit, found in Rickettsia akari (strain Hartford).